We begin with the raw amino-acid sequence, 141 residues long: Hemoglobin subunit alpha-D (141 aa).

The Globin domain maps to 1–141 (MLTAEDKKLI…VAAVLAEKYR (141 aa)). H58 and H87 together coordinate heme b.

Heterotetramer of two alpha-D chains and two beta chains. In terms of tissue distribution, red blood cells.

Its function is as follows. Involved in oxygen transport from the lung to the various peripheral tissues. The chain is Hemoglobin subunit alpha-D (HBAD) from Aythya fuligula (Tufted duck).